The chain runs to 392 residues: 8-amino-7-oxononanoate synthase (392 aa).

Arg-18 is a binding site for substrate. 105 to 106 (GY) lines the pyridoxal 5'-phosphate pocket. Residue His-130 coordinates substrate. Residues Ser-177, His-205, and Thr-234 each contribute to the pyridoxal 5'-phosphate site. Lys-237 carries the post-translational modification N6-(pyridoxal phosphate)lysine. Position 351 (Thr-351) interacts with substrate.

This sequence belongs to the class-II pyridoxal-phosphate-dependent aminotransferase family. BioF subfamily. As to quaternary structure, homodimer. Requires pyridoxal 5'-phosphate as cofactor.

It carries out the reaction 6-carboxyhexanoyl-[ACP] + L-alanine + H(+) = (8S)-8-amino-7-oxononanoate + holo-[ACP] + CO2. The protein operates within cofactor biosynthesis; biotin biosynthesis. In terms of biological role, catalyzes the decarboxylative condensation of pimeloyl-[acyl-carrier protein] and L-alanine to produce 8-amino-7-oxononanoate (AON), [acyl-carrier protein], and carbon dioxide. This chain is 8-amino-7-oxononanoate synthase, found in Thioalkalivibrio sulfidiphilus (strain HL-EbGR7).